The primary structure comprises 636 residues: Transcription termination factor FttA (636 aa).

Residues 3 to 70 (SEMLEEIKRT…IIIRSDRSVL (68 aa)) are KHa. Residues 71 to 138 (MDPEKAIRKI…WAPKILRTPP (68 aa)) form a KHb region. Residues 179–383 (WARLTAMGGF…LVMESTYGGH (205 aa)) are metallo-beta-lactamase N-terminus. Zn(2+) is bound by residues His-242, His-244, Asp-246, His-247, His-329, and Asp-352. Positions 384 to 577 (EDVQPSRNRA…MNIKTIEGFS (194 aa)) are beta-Casp. The interval 578–636 (GHSDRRQLMEYVKRISPKPEKILLCHGDNYKTLDLASSIYRTYRIETKTPLNLETVRIQ) is metallo-beta-lactamase C-terminus. His-603 is a binding site for Zn(2+).

The protein belongs to the metallo-beta-lactamase superfamily. RNA-metabolizing metallo-beta-lactamase-like family. FttA subfamily. In terms of assembly, homodimer. Interacts with RNA polymerase (RNAP), interacts with the Spt4-Spt5 complex. Does not seem to interact with the RNA degrading exosome. Zn(2+) serves as cofactor.

Its activity is regulated as follows. Most active at 0.5 M or 0.7 M NaCl, less active at 1.0 M NaCl. Nuclease activity is inhibited by N,N,Tetrakis-(2-pyridylmethyl)-ethylene diamine (TPEN), a specific chelator of zinc ions. Functionally, terminates transcription on the whole genome. Termination is linked to FttA-mediated RNA cleavage and does not require NTP hydrolysis. Cleaves endonucleolytically at the RNA exit channel of RNA polymerase (RNAP); the 5'-3' exonuclease activity of this protein degrades the nascent RNA released from RNAP. An RNA nuclease, it bind single-stranded RNA (ssRNA) with a preference for U-rich sequences. The protein is Transcription termination factor FttA of Methanothermobacter thermautotrophicus (strain ATCC 29096 / DSM 1053 / JCM 10044 / NBRC 100330 / Delta H) (Methanobacterium thermoautotrophicum).